Consider the following 477-residue polypeptide: MAHLLSASCPSVISLSSSSSKNSVKPFVSGQTFFNAQLLSRSSLKGLLFQEKKPRKSCVFRATAVPITQQAPPETSTNNSSSKPKRVMVIGGDGYCGWATALHLSKKNYEVCIVDNLVRRLFDHQLGLESLTPIASIHDRISRWKALTGKSIELYVGDICDFEFLAESFKSFEPDSVVHFGEQRSAPYSMIDRSRAVYTQHNNVIGTLNVLFAIKEFGEECHLVKLGTMGEYGTPNIDIEEGYITITHNGRTDTLPYPKQASSFYHLSKVHDSHNIAFTCKAWGIRATDLNQGVVYGVKTDETEMHEELRNRLDYDAVFGTALNRFCVQAAVGHPLTVYGKGGQTRGYLDIRDTVQCVEIAIANPAKAGEFRVFNQFTEQFSVNELASLVTKAGSKLGLDVKKMTVPNPRVEAEEHYYNAKHTKLMELGLEPHYLSDSLLDSLLNFAVQFKDRVDTKQIMPSVSWKKIGVKTKSMTT.

Positions 1–21 are disordered; that stretch reads MAHLLSASCPSVISLSSSSSK. Residues 1–86 constitute a chloroplast transit peptide; the sequence is MAHLLSASCP…TNNSSSKPKR (86 aa). Residues 95–96, 115–119, 158–159, Arg-184, and Asn-202 each bind NAD(+); these read YC, DNLVR, and DI. Residue Arg-184 coordinates substrate. 2 residues coordinate substrate: Thr-228 and Tyr-265. Thr-228 is an active-site residue. Residues Tyr-265 and Lys-269 each coordinate NAD(+). The Proton acceptor role is filled by Tyr-265. Lys-269 is a catalytic residue. Residue Gln-292 coordinates substrate. NAD(+) is bound at residue Val-295. Substrate is bound by residues 322-325, 337-339, and 410-412; these read ALNR, TVY, and RVE.

The protein belongs to the NAD(P)-dependent epimerase/dehydratase family. Homodimer. Requires NAD(+) as cofactor.

It localises to the plastid. It is found in the chloroplast. The enzyme catalyses sulfite + UDP-alpha-D-glucose + H(+) = UDP-alpha-D-6-sulfoquinovose + H2O. Concentrations above 100 uM sulfite inhibit the reaction. Functionally, involved in the biosynthesis of sulfolipids found in thylakoid membranes. Converts UDP-glucose and sulfite to the sulfolipid head group precursor UDP-sulfoquinovose. In Arabidopsis thaliana (Mouse-ear cress), this protein is UDP-sulfoquinovose synthase, chloroplastic (SQD1).